A 446-amino-acid chain; its full sequence is Ribosomal protein uS12 methylthiotransferase RimO (446 aa).

Residues 6 to 116 (PNIGFISLGC…VMQQVHKYVP (111 aa)) form the MTTase N-terminal domain. [4Fe-4S] cluster is bound by residues cysteine 15, cysteine 51, cysteine 80, cysteine 148, cysteine 152, and cysteine 155. The Radical SAM core domain maps to 134–375 (LTPKHYAYLK…MQLQQEISAA (242 aa)). Positions 378–446 (QQKVGKVFTV…AYDLYASLIN (69 aa)) constitute a TRAM domain.

Belongs to the methylthiotransferase family. RimO subfamily. [4Fe-4S] cluster is required as a cofactor.

Its subcellular location is the cytoplasm. It catalyses the reaction L-aspartate(89)-[ribosomal protein uS12]-hydrogen + (sulfur carrier)-SH + AH2 + 2 S-adenosyl-L-methionine = 3-methylsulfanyl-L-aspartate(89)-[ribosomal protein uS12]-hydrogen + (sulfur carrier)-H + 5'-deoxyadenosine + L-methionine + A + S-adenosyl-L-homocysteine + 2 H(+). Functionally, catalyzes the methylthiolation of an aspartic acid residue of ribosomal protein uS12. The chain is Ribosomal protein uS12 methylthiotransferase RimO from Pasteurella multocida (strain Pm70).